The primary structure comprises 607 residues: Bifunctional endo-1,4-beta-xylanase A (607 aa).

The signal sequence occupies residues 1–18 (MRTIKFFFAVAIATVAKA). Residues 35–242 (NGQTQHKGVA…SSGIADVTKL (208 aa)) form the GH11 1 domain. Catalysis depends on Glu-141, which acts as the Nucleophile. Glu-223 (proton donor) is an active-site residue. Over residues 248 to 272 (QKGSNPAPTSTGTVPSSSAGGSTAN) the composition is skewed to polar residues. The interval 248 to 284 (QKGSNPAPTSTGTVPSSSAGGSTANGKKFTVGNGQNQ) is disordered. The region spanning 280–487 (NGQNQHKGVN…SSGVADVTLL (208 aa)) is the GH11 2 domain. The active-site Nucleophile is the Glu-386. Glu-474 serves as the catalytic Proton donor. The disordered stretch occupies residues 493–514 (PKGSSPATSAAPRTTTRTTTRT). The span at 496-514 (SSPATSAAPRTTTRTTTRT) shows a compositional bias: low complexity. CBM10 domains lie at 523–563 (KCSA…CGCG) and 566–606 (QCSS…CGCG).

The protein belongs to the glycosyl hydrolase 11 (cellulase G) family.

It catalyses the reaction Endohydrolysis of (1-&gt;4)-beta-D-xylosidic linkages in xylans.. It functions in the pathway glycan degradation; xylan degradation. Hydrolyzes xylans into xylobiose and xylose. The polypeptide is Bifunctional endo-1,4-beta-xylanase A (XYNA) (Neocallimastix patriciarum (Rumen fungus)).